Reading from the N-terminus, the 607-residue chain is UvrABC system protein C (607 aa).

Residues 15-94 (ENPGVYLMKN…IKRHRPYFNV (80 aa)) enclose the GIY-YIG domain. A UVR domain is found at 204 to 239 (DQVLKLLIRLMNEASARLDYETAALRRDQIASIKEV).

This sequence belongs to the UvrC family. As to quaternary structure, interacts with UvrB in an incision complex.

The protein localises to the cytoplasm. In terms of biological role, the UvrABC repair system catalyzes the recognition and processing of DNA lesions. UvrC both incises the 5' and 3' sides of the lesion. The N-terminal half is responsible for the 3' incision and the C-terminal half is responsible for the 5' incision. The sequence is that of UvrABC system protein C from Dehalococcoides mccartyi (strain CBDB1).